A 309-amino-acid chain; its full sequence is 2-dehydro-3-deoxygluconokinase (309 aa).

Substrate-binding positions include 28–32 (GDTLN), Y88, 102–104 (YWR), and R170. ATP-binding positions include 168-170 (NYR), 228-233 (KRGADS), and 261-264 (AAGD). A substrate-binding site is contributed by D264. Catalysis depends on D264, which acts as the Proton acceptor.

The protein belongs to the carbohydrate kinase PfkB family.

The enzyme catalyses 2-dehydro-3-deoxy-D-gluconate + ATP = 2-dehydro-3-deoxy-6-phospho-D-gluconate + ADP + H(+). The protein operates within carbohydrate acid metabolism; 2-dehydro-3-deoxy-D-gluconate degradation; D-glyceraldehyde 3-phosphate and pyruvate from 2-dehydro-3-deoxy-D-gluconate: step 1/2. Its function is as follows. Catalyzes the phosphorylation of 2-keto-3-deoxygluconate (KDG) to produce 2-keto-3-deoxy-6-phosphogluconate (KDPG). This is 2-dehydro-3-deoxygluconokinase (kdgK) from Escherichia coli (strain K12).